Here is a 429-residue protein sequence, read N- to C-terminus: Adenylosuccinate synthetase (429 aa).

Residues 12 to 18 (GDEGKGK) and 40 to 42 (GHT) contribute to the GTP site. Residue D13 is the Proton acceptor of the active site. 2 residues coordinate Mg(2+): D13 and G40. IMP contacts are provided by residues 13–16 (DEGK), 38–41 (NAGH), T127, R141, Q222, T237, and R301. Residue H41 is the Proton donor of the active site. 297–303 (ATTGRPR) is a binding site for substrate. GTP contacts are provided by residues R303, 329-331 (KLD), and 411-413 (SLG).

Belongs to the adenylosuccinate synthetase family. As to quaternary structure, homodimer. It depends on Mg(2+) as a cofactor.

The protein resides in the cytoplasm. The enzyme catalyses IMP + L-aspartate + GTP = N(6)-(1,2-dicarboxyethyl)-AMP + GDP + phosphate + 2 H(+). It participates in purine metabolism; AMP biosynthesis via de novo pathway; AMP from IMP: step 1/2. Its function is as follows. Plays an important role in the de novo pathway of purine nucleotide biosynthesis. Catalyzes the first committed step in the biosynthesis of AMP from IMP. In Endomicrobium trichonymphae, this protein is Adenylosuccinate synthetase.